We begin with the raw amino-acid sequence, 216 residues long: Cytidylate kinase (216 aa).

10–18 (GPAGAGKST) provides a ligand contact to ATP.

It belongs to the cytidylate kinase family. Type 1 subfamily.

The protein resides in the cytoplasm. It carries out the reaction CMP + ATP = CDP + ADP. The enzyme catalyses dCMP + ATP = dCDP + ADP. The chain is Cytidylate kinase from Clostridioides difficile (strain 630) (Peptoclostridium difficile).